The sequence spans 537 residues: Probable glucomannan 4-beta-mannosyltransferase 15 (537 aa).

Residues 50–70 form a helical membrane-spanning segment; that stretch reads FIVPLFKCIVVMCLIISLLVF. Asp150 is an active-site residue. The substrate site is built by Asp209 and Asp211. Residue Asp303 is part of the active site. The next 4 helical transmembrane spans lie at 382–402, 418–438, 494–514, and 515–535; these read IVVH…SVFL, VITL…IFWV, EMMM…FGNA, and FLYL…VGFV.

The protein belongs to the glycosyltransferase 2 family. Plant cellulose synthase-like A subfamily.

It localises to the golgi apparatus membrane. It carries out the reaction GDP-mannose + (glucomannan)n = GDP + (glucomannan)n+1.. Its function is as follows. Probable mannan synthase which consists of a 4-beta-mannosyltransferase activity on mannan using GDP-mannose. The beta-1,4-mannan product is the backbone for galactomannan synthesis by galactomannan galactosyltransferase. Galactomannan is a noncellulosic polysaccharides of plant cell wall. The polypeptide is Probable glucomannan 4-beta-mannosyltransferase 15 (Arabidopsis thaliana (Mouse-ear cress)).